The following is a 205-amino-acid chain: Recombination protein RecR (205 aa).

The segment at 60 to 75 (CKVCHNISDTETCRIC) adopts a C4-type zinc-finger fold. The Toprim domain maps to 83-178 (STICVVESIR…KLSVIARGIS (96 aa)).

The protein belongs to the RecR family.

May play a role in DNA repair. It seems to be involved in an RecBC-independent recombinational process of DNA repair. It may act with RecF and RecO. This is Recombination protein RecR from Phocaeicola vulgatus (strain ATCC 8482 / DSM 1447 / JCM 5826 / CCUG 4940 / NBRC 14291 / NCTC 11154) (Bacteroides vulgatus).